The following is a 254-amino-acid chain: Type III pantothenate kinase 2 (254 aa).

6 to 13 (DMGNSHIH) provides a ligand contact to ATP. 107 to 110 (GADR) is a binding site for substrate. The active-site Proton acceptor is aspartate 109. Aspartate 130 contacts K(+). Threonine 133 is a binding site for ATP. Threonine 185 is a binding site for substrate.

The protein belongs to the type III pantothenate kinase family. Homodimer. NH4(+) serves as cofactor. The cofactor is K(+).

Its subcellular location is the cytoplasm. The catalysed reaction is (R)-pantothenate + ATP = (R)-4'-phosphopantothenate + ADP + H(+). It functions in the pathway cofactor biosynthesis; coenzyme A biosynthesis; CoA from (R)-pantothenate: step 1/5. Functionally, catalyzes the phosphorylation of pantothenate (Pan), the first step in CoA biosynthesis. The protein is Type III pantothenate kinase 2 of Francisella tularensis subsp. holarctica (strain LVS).